Reading from the N-terminus, the 241-residue chain is Glutathione S-transferase omega-1 (241 aa).

Serine 2 is modified (N-acetylserine). The region spanning 22–101 (GQIRVYSMRF…YLDEAYPEKK (80 aa)) is the GST N-terminal domain. The Nucleophile role is filled by cysteine 32. An N6-acetyllysine modification is found at lysine 57. Glutathione is bound by residues lysine 59, valine 72, and 85-86 (ES). The region spanning 106–228 (DPYEKACQKM…AKTYRDYLSL (123 aa)) is the GST C-terminal domain. Serine 129 carries the post-translational modification Phosphoserine. Lysine 143, lysine 148, and lysine 152 each carry N6-acetyllysine.

It belongs to the GST superfamily. Omega family. In terms of assembly, homodimer.

Its subcellular location is the cytoplasm. It is found in the cytosol. The catalysed reaction is RX + glutathione = an S-substituted glutathione + a halide anion + H(+). It catalyses the reaction L-dehydroascorbate + 2 glutathione = glutathione disulfide + L-ascorbate. The enzyme catalyses methylarsonate + 2 glutathione + H(+) = methylarsonous acid + glutathione disulfide + H2O. Functionally, exhibits glutathione-dependent thiol transferase and dehydroascorbate reductase activities. Has S-(phenacyl)glutathione reductase activity. Also has glutathione S-transferase activity. Participates in the biotransformation of inorganic arsenic and reduces monomethylarsonic acid (MMA) and dimethylarsonic acid. This Rattus norvegicus (Rat) protein is Glutathione S-transferase omega-1 (Gsto1).